The chain runs to 145 residues: 3-dehydroquinate dehydratase (145 aa).

The active-site Proton acceptor is the Y22. Substrate-binding residues include N73, H79, and D86. The active-site Proton donor is the H99. Substrate-binding positions include 100–101 (LS) and R110.

This sequence belongs to the type-II 3-dehydroquinase family. As to quaternary structure, homododecamer.

It catalyses the reaction 3-dehydroquinate = 3-dehydroshikimate + H2O. The protein operates within metabolic intermediate biosynthesis; chorismate biosynthesis; chorismate from D-erythrose 4-phosphate and phosphoenolpyruvate: step 3/7. Functionally, catalyzes a trans-dehydration via an enolate intermediate. This chain is 3-dehydroquinate dehydratase, found in Prochlorococcus marinus (strain NATL1A).